A 340-amino-acid chain; its full sequence is Solute carrier family 35 member G3 (340 aa).

Positions 11–31 are disordered; the sequence is PDFTQPSPPSTPSSLTSNHHN. 9 helical membrane-spanning segments follow: residues 39-59, 69-89, 107-127, 160-180, 189-209, 223-243, 257-277, 283-303, and 307-327; these read TKGLFVALLGGGLSAGFVGPF, LPSLELLIFRCLFHLPIALIL, FLHAILNVLSIGCAYSAVQVV, AWCGLFGSTLGLIIIVGPGLG, LYTALGYVLAFLGGLALSLGL, TVAFLFGLVGLIVSVPGLFVL, CMVAVGLLALVSFVCVSYAVT, LVCAVLHSEVVVALMLQYYVL, and VAPSDIMGAGVVLGSIAIITA. The EamA 1 domain occupies 51–176; sequence LSAGFVGPFS…STLGLIIIVG (126 aa). An EamA 2 domain is found at 223-327; the sequence is TVAFLFGLVG…VLGSIAIITA (105 aa).

It belongs to the SLC35G solute transporter family.

It is found in the membrane. The protein is Solute carrier family 35 member G3 (Slc35g3) of Rattus norvegicus (Rat).